A 621-amino-acid chain; its full sequence is Protein Tra (621 aa).

A helical transmembrane segment spans residues 126-146; that stretch reads GAWPVAGSLALIAANVAALVI. One can recognise a FtsK domain in the interval 275-465; it reads GEPVQVPLGR…LALSTSGESR (191 aa). 290–297 provides a ligand contact to ATP; the sequence is GTSGSGKS. The chain crosses the membrane as a helical span at residues 564 to 584; sequence VAAAIGTGATTVADVATVTGI.

Its subcellular location is the cell membrane. Its function is as follows. Major protein required for plasmid transfer. This is Protein Tra (tra) from Streptomyces lividans.